Consider the following 2789-residue polypeptide: Testis-expressed protein 15 (2789 aa).

Residues 34-46 (HNNTGSSTVTTSK) are compositionally biased toward polar residues. Disordered regions lie at residues 34 to 99 (HNNT…SSEV), 169 to 191 (ENQNHSEEKAQRAQQESGNAYTK), 1063 to 1166 (FSSK…EHQP), 2303 to 2331 (KNISNSSKKRPSTVDKCEDSQEQQQDTTV), and 2351 to 2379 (KATFKHPRTTGSHPKSENKIVPSSCDSLK). Over residues 47–59 (SIKDPRLMRREES) the composition is skewed to basic and acidic residues. The segment covering 80 to 98 (DNVNSEIKSTPSNSASSSE) has biased composition (polar residues). The span at 170 to 179 (NQNHSEEKAQ) shows a compositional bias: basic and acidic residues. Over residues 1063–1077 (FSSKRKYDKRRKKRA) the composition is skewed to basic residues. 2 stretches are compositionally biased toward low complexity: residues 1106–1116 (RKSMASSVSKS) and 1134–1160 (SQLPVSSTSQSTSQSVYYNSSVSNPSL).

Belongs to the TEX15 family. As to quaternary structure, interacts with PIWIL4 and PIWIL2. In terms of tissue distribution, expressed in testis, predominantly in germ cells. Low expression, if any, in ovary. Also expressed in several cancers.

It localises to the cytoplasm. Its subcellular location is the nucleus. Its function is as follows. Required during spermatogenesis for normal chromosome synapsis and meiotic recombination in germ cells. Necessary for formation of DMC1 and RAD51 foci on meiotic chromosomes, suggesting a specific role in DNA double-stranded break repair. Essential executor of PIWIL4-piRNA pathway directed transposon DNA methylation and silencing in the male embryonic germ cells. PIWIL4-piRNA binds to nascent transposon transcripts and interacts with TEX15, which may in turn recruit the epigenetic silencing machinery to the transposon loci. Not required for piRNA biosynthesis. The polypeptide is Testis-expressed protein 15 (TEX15) (Homo sapiens (Human)).